The primary structure comprises 350 residues: NADH-quinone oxidoreductase subunit H (350 aa).

The next 8 helical transmembrane spans lie at 5-25 (FIIEKSVVIVVVFAVTMIMAM), 76-96 (FLFVVGPAIAMSTALMTSAVI), 118-138 (IALLYIFGVLSVGVYGIMIGG), 162-182 (IAMGLSMIALLMMTGTMSLKV), 190-210 (MNWNVFYQPLSFLIFLICSFA), 243-263 (LFAEYASMFISSTIISVLFFG), 284-304 (LLGIAVLFVKICFFIFFYMWV), and 319-339 (LGWRILIPLSIINIMITGAVI).

This sequence belongs to the complex I subunit 1 family. In terms of assembly, NDH-1 is composed of 14 different subunits. Subunits NuoA, H, J, K, L, M, N constitute the membrane sector of the complex.

It localises to the cell inner membrane. The enzyme catalyses a quinone + NADH + 5 H(+)(in) = a quinol + NAD(+) + 4 H(+)(out). In terms of biological role, NDH-1 shuttles electrons from NADH, via FMN and iron-sulfur (Fe-S) centers, to quinones in the respiratory chain. The immediate electron acceptor for the enzyme in this species is believed to be ubiquinone. Couples the redox reaction to proton translocation (for every two electrons transferred, four hydrogen ions are translocated across the cytoplasmic membrane), and thus conserves the redox energy in a proton gradient. This subunit may bind ubiquinone. This is NADH-quinone oxidoreductase subunit H from Flavobacterium johnsoniae (strain ATCC 17061 / DSM 2064 / JCM 8514 / BCRC 14874 / CCUG 350202 / NBRC 14942 / NCIMB 11054 / UW101) (Cytophaga johnsonae).